A 317-amino-acid chain; its full sequence is Adenine deaminase (317 aa).

H14, H16, and H194 together coordinate Zn(2+). E197 serves as the catalytic Proton donor. D275 contacts Zn(2+). Substrate is bound at residue D276.

The protein belongs to the metallo-dependent hydrolases superfamily. Adenosine and AMP deaminases family. Adenine deaminase type 2 subfamily. Zn(2+) is required as a cofactor.

It catalyses the reaction adenine + H2O + H(+) = hypoxanthine + NH4(+). In terms of biological role, catalyzes the hydrolytic deamination of adenine to hypoxanthine. Plays an important role in the purine salvage pathway and in nitrogen catabolism. The polypeptide is Adenine deaminase (Pseudomonas syringae pv. syringae (strain B728a)).